Reading from the N-terminus, the 415-residue chain is Putative competence-damage inducible protein (415 aa).

It belongs to the CinA family.

The polypeptide is Putative competence-damage inducible protein (Listeria innocua serovar 6a (strain ATCC BAA-680 / CLIP 11262)).